Reading from the N-terminus, the 600-residue chain is Alpha-N-acetylgalactosaminide alpha-2,6-sialyltransferase 1 (600 aa).

Topologically, residues 1–14 (MRSCLWRCRHLSQG) are cytoplasmic. A helical; Signal-anchor for type II membrane protein membrane pass occupies residues 15-35 (VQWSLLLAVLVFFLFALPSFI). Over 36 to 600 (KEPQTKPSRH…PGPGTAKAKN (565 aa)) the chain is Lumenal. Disordered regions lie at residues 38-191 (PQTK…AATT) and 208-248 (GAVS…TQRN). Residues 46-55 (QRTENIKERS) are compositionally biased toward basic and acidic residues. Polar residues-rich tracts occupy residues 84 to 94 (NALNTQTQPKA), 151 to 179 (TEAQ…ASRT), and 209 to 219 (AVSTRTRQKGV). Disulfide bonds link Cys279-Cys362 and Cys365-Cys533. 5 N-linked (GlcNAc...) asparagine glycosylation sites follow: Asn300, Asn311, Asn331, Asn375, and Asn460.

This sequence belongs to the glycosyltransferase 29 family. In terms of processing, glycosylated; autosialylated. In terms of tissue distribution, expression is restricted to the gastrointestinal tract. Highly expressed in goblet cells. Also expressed in various tumor cells.

It is found in the golgi apparatus membrane. It catalyses the reaction a beta-D-galactosyl-(1-&gt;3)-N-acetyl-alpha-D-galactosaminyl derivative + CMP-N-acetyl-beta-neuraminate = a beta-D-galactosyl-(1-&gt;3)-[N-acetyl-alpha-neuraminyl-(2-&gt;6)]-N-acetyl-alpha-D-galactosaminyl derivative + CMP + H(+). The catalysed reaction is a 3-O-[N-acetyl-alpha-D-galactosaminyl]-L-seryl-[protein] + CMP-N-acetyl-beta-neuraminate = a 3-O-[N-acetyl-alpha-neuraminosyl-(2-&gt;6)-N-acetyl-alpha-D-galactosaminyl]-L-seryl-[protein] + CMP + H(+). The enzyme catalyses a 3-O-[N-acetyl-alpha-D-galactosaminyl]-L-threonyl-[protein] + CMP-N-acetyl-beta-neuraminate = a 3-O-[N-acetyl-alpha-neuraminosyl-(2-&gt;6)-N-acetyl-alpha-D-galactosaminyl]-L-threonyl-[protein] + CMP + H(+). It carries out the reaction a 3-O-[beta-D-galactosyl-(1-&gt;3)-N-acetyl-alpha-D-galactosaminyl]-L-seryl-[protein] + CMP-N-acetyl-beta-neuraminate = a 3-O-{beta-D-galactosyl-(1-&gt;3)-[N-acetyl-alpha-neuraminosyl-(2-&gt;6)]-N-acetyl-alpha-D-galactosaminyl}-L-seryl-[protein] + CMP + H(+). It catalyses the reaction a 3-O-[beta-D-galactosyl-(1-&gt;3)-N-acetyl-alpha-D-galactosaminyl]-L-threonyl-[protein] + CMP-N-acetyl-beta-neuraminate = a 3-O-{beta-D-galactosyl-(1-&gt;3)-[N-acetyl-alpha-neuraminosyl-(2-&gt;6)]-N-acetyl-alpha-D-galactosaminyl}-L-threonyl-[protein] + CMP + H(+). The catalysed reaction is a 3-O-[N-acetyl-alpha-neuraminyl-(2-&gt;3)-beta-D-galactosyl-(1-&gt;3)-N-acetyl-alpha-D-galactosaminyl]-L-threonyl-[protein] + CMP-N-acetyl-beta-neuraminate = a 3-O-{alpha-Neu5Ac-(2-&gt;3)-beta-D-Gal-(1-&gt;3)-[alpha-Neu5Ac-(2-&gt;6)]-alpha-D-GalNAc}-L-threonyl-[protein] + CMP + H(+). It participates in protein modification; protein glycosylation. Protein sialyltransferase specifically expressed in goblet cells that plays a key role in intestinal host-commensal homeostasis. Conjugates sialic acid with an alpha-2-6 linkage to N-acetylgalactosamine (GalNAc) glycan chains linked to serine or threonine in glycoproteins. Catalyzes the formation of the sialyl-Tn (S-Tn) antigen, an antigen found in intestinal goblet cells, as well as ulcerative colitis (UC) and various cancers. Protein sialylation in globlet cells is essential for mucus integrity and is required to protect the intestinal mucus against excessive bacterial proteolytic degradation. This is Alpha-N-acetylgalactosaminide alpha-2,6-sialyltransferase 1 from Homo sapiens (Human).